The following is a 224-amino-acid chain: CMRF35-like molecule 6 (224 aa).

An N-terminal signal peptide occupies residues M1–P20. At G21–R183 the chain is on the extracellular side. The region spanning Y22–S130 is the Ig-like V-type domain. 2 cysteine pairs are disulfide-bonded: C43-C110 and C57-C65. N-linked (GlcNAc...) asparagine glycans are attached at residues N90 and N99. Over residues T136–P151 the composition is skewed to polar residues. The segment at T136–H174 is disordered. A helical membrane pass occupies residues F184–W204. Residues V205–Q224 are Cytoplasmic-facing.

Belongs to the CD300 family. Present on the surface of monocytes, neutrophils, a proportion of peripheral blood T- and B-lymphocytes and lymphocytic cell lines.

It is found in the cell membrane. In Homo sapiens (Human), this protein is CMRF35-like molecule 6 (CD300C).